The primary structure comprises 97 residues: MSDKHVDIDTVKYISKLSKLKFTDNEAKKLAGEFEAILGHFETIDKVDLSDINVNEFDEVNTEFRKDVPKVFEDKKKLMQNVKSLRDGAIEVPKIIE.

The protein belongs to the GatC family. In terms of assembly, heterotrimer of A, B and C subunits.

It carries out the reaction L-glutamyl-tRNA(Gln) + L-glutamine + ATP + H2O = L-glutaminyl-tRNA(Gln) + L-glutamate + ADP + phosphate + H(+). The enzyme catalyses L-aspartyl-tRNA(Asn) + L-glutamine + ATP + H2O = L-asparaginyl-tRNA(Asn) + L-glutamate + ADP + phosphate + 2 H(+). Functionally, allows the formation of correctly charged Asn-tRNA(Asn) or Gln-tRNA(Gln) through the transamidation of misacylated Asp-tRNA(Asn) or Glu-tRNA(Gln) in organisms which lack either or both of asparaginyl-tRNA or glutaminyl-tRNA synthetases. The reaction takes place in the presence of glutamine and ATP through an activated phospho-Asp-tRNA(Asn) or phospho-Glu-tRNA(Gln). This is Glutamyl-tRNA(Gln) amidotransferase subunit C 2 (gatC2) from Clostridium acetobutylicum (strain ATCC 824 / DSM 792 / JCM 1419 / IAM 19013 / LMG 5710 / NBRC 13948 / NRRL B-527 / VKM B-1787 / 2291 / W).